Reading from the N-terminus, the 465-residue chain is ATP synthase subunit beta (465 aa).

152–159 (GGAGVGKT) is an ATP binding site.

The protein belongs to the ATPase alpha/beta chains family. In terms of assembly, F-type ATPases have 2 components, CF(1) - the catalytic core - and CF(0) - the membrane proton channel. CF(1) has five subunits: alpha(3), beta(3), gamma(1), delta(1), epsilon(1). CF(0) has three main subunits: a(1), b(2) and c(9-12). The alpha and beta chains form an alternating ring which encloses part of the gamma chain. CF(1) is attached to CF(0) by a central stalk formed by the gamma and epsilon chains, while a peripheral stalk is formed by the delta and b chains.

Its subcellular location is the cell membrane. It catalyses the reaction ATP + H2O + 4 H(+)(in) = ADP + phosphate + 5 H(+)(out). Its function is as follows. Produces ATP from ADP in the presence of a proton gradient across the membrane. The catalytic sites are hosted primarily by the beta subunits. The sequence is that of ATP synthase subunit beta from Desulfitobacterium hafniense (strain Y51).